A 708-amino-acid polypeptide reads, in one-letter code: Fatty acid oxidation complex subunit alpha (708 aa).

The tract at residues 1 to 190 (MSQDKAFTME…KAGLVTEVVP (190 aa)) is enoyl-CoA hydratase. The interval 310 to 708 (DSVKRVGVLG…MLENGWNFYQ (399 aa)) is 3-hydroxyacyl-CoA dehydrogenase.

The protein in the N-terminal section; belongs to the enoyl-CoA hydratase/isomerase family. It in the central section; belongs to the 3-hydroxyacyl-CoA dehydrogenase family. Heterotetramer of two alpha chains (FadJ) and two beta chains (FadI).

It localises to the cytoplasm. It carries out the reaction a (3S)-3-hydroxyacyl-CoA = a (2E)-enoyl-CoA + H2O. It catalyses the reaction a 4-saturated-(3S)-3-hydroxyacyl-CoA = a (3E)-enoyl-CoA + H2O. The catalysed reaction is a (3S)-3-hydroxyacyl-CoA + NAD(+) = a 3-oxoacyl-CoA + NADH + H(+). The enzyme catalyses (3S)-3-hydroxybutanoyl-CoA = (3R)-3-hydroxybutanoyl-CoA. It participates in lipid metabolism; fatty acid beta-oxidation. Catalyzes the formation of a hydroxyacyl-CoA by addition of water on enoyl-CoA. Also exhibits 3-hydroxyacyl-CoA epimerase and 3-hydroxyacyl-CoA dehydrogenase activities. This is Fatty acid oxidation complex subunit alpha from Idiomarina loihiensis (strain ATCC BAA-735 / DSM 15497 / L2-TR).